The primary structure comprises 151 residues: US8.5 protein (151 aa).

The disordered stretch occupies residues 27 to 107 (SSQPLDPEGP…APSPHPRPPG (81 aa)). The segment covering 80–91 (SDERGPPRHDRP) has biased composition (basic and acidic residues).

It is found in the host nucleus. It localises to the host nucleolus. This chain is US8.5 protein (US8.5), found in Human herpesvirus 1 (strain F) (HHV-1).